A 291-amino-acid polypeptide reads, in one-letter code: UPF0276 protein VV3194 (291 aa).

It belongs to the UPF0276 family.

The polypeptide is UPF0276 protein VV3194 (Vibrio vulnificus (strain YJ016)).